The chain runs to 214 residues: Orotate phosphoribosyltransferase (214 aa).

Lys-26 is a binding site for 5-phospho-alpha-D-ribose 1-diphosphate. 34–35 (FF) contributes to the orotate binding site. 5-phospho-alpha-D-ribose 1-diphosphate-binding positions include 72–73 (YK), Arg-99, Lys-100, Lys-103, His-105, and 124–132 (DDVITAGTA). Residues Thr-128 and Arg-156 each coordinate orotate.

Belongs to the purine/pyrimidine phosphoribosyltransferase family. PyrE subfamily. In terms of assembly, homodimer. The cofactor is Mg(2+).

It carries out the reaction orotidine 5'-phosphate + diphosphate = orotate + 5-phospho-alpha-D-ribose 1-diphosphate. It functions in the pathway pyrimidine metabolism; UMP biosynthesis via de novo pathway; UMP from orotate: step 1/2. Catalyzes the transfer of a ribosyl phosphate group from 5-phosphoribose 1-diphosphate to orotate, leading to the formation of orotidine monophosphate (OMP). This chain is Orotate phosphoribosyltransferase, found in Pseudoalteromonas translucida (strain TAC 125).